The primary structure comprises 167 residues: Large ribosomal subunit protein uL10 (167 aa).

It belongs to the universal ribosomal protein uL10 family. As to quaternary structure, part of the ribosomal stalk of the 50S ribosomal subunit. The N-terminus interacts with L11 and the large rRNA to form the base of the stalk. The C-terminus forms an elongated spine to which L12 dimers bind in a sequential fashion forming a multimeric L10(L12)X complex.

Forms part of the ribosomal stalk, playing a central role in the interaction of the ribosome with GTP-bound translation factors. This is Large ribosomal subunit protein uL10 from Erwinia tasmaniensis (strain DSM 17950 / CFBP 7177 / CIP 109463 / NCPPB 4357 / Et1/99).